The chain runs to 155 residues: Small ribosomal subunit protein uS7 (155 aa).

This sequence belongs to the universal ribosomal protein uS7 family. Part of the 30S ribosomal subunit. Contacts proteins S9 and S11.

Functionally, one of the primary rRNA binding proteins, it binds directly to 16S rRNA where it nucleates assembly of the head domain of the 30S subunit. Is located at the subunit interface close to the decoding center, probably blocks exit of the E-site tRNA. In Helicobacter pylori (strain Shi470), this protein is Small ribosomal subunit protein uS7.